We begin with the raw amino-acid sequence, 565 residues long: Bifunctional dihydrofolate reductase-thymidylate synthase 2 (565 aa).

A DHFR domain is found at 65–242 (TYQVVVAATK…LRFSFTTHVR (178 aa)). Val69 is a substrate binding site. NADP(+)-binding positions include Ala71 and 77-83 (GIGKDGK). Asp91 lines the substrate pocket. Residues 115-117 (RKT) and 136-139 (LSRS) contribute to the NADP(+) site. Ile178 is a substrate binding site. 179-186 (GGGDILRE) contacts NADP(+). Thr199 is a substrate binding site. Residues 245 to 280 (SSSAGEASDESDGSKVLQVDWKKFSSVLPKMIFDRH) form a hinge region. The tract at residues 281–565 (EEYLYLNLVK…HKKIDMKMAV (285 aa)) is thymidylate synthase. A dUMP-binding site is contributed by Arg302. Residue Cys447 is part of the active site. DUMP contacts are provided by residues His448, 466-470 (QRSAD), Asn478, and 508-510 (HVY).

In the N-terminal section; belongs to the dihydrofolate reductase family. This sequence in the C-terminal section; belongs to the thymidylate synthase family. Heterodimer or homodimer.

The enzyme catalyses (6S)-5,6,7,8-tetrahydrofolate + NADP(+) = 7,8-dihydrofolate + NADPH + H(+). It catalyses the reaction dUMP + (6R)-5,10-methylene-5,6,7,8-tetrahydrofolate = 7,8-dihydrofolate + dTMP. It functions in the pathway cofactor biosynthesis; tetrahydrofolate biosynthesis; 5,6,7,8-tetrahydrofolate from 7,8-dihydrofolate: step 1/1. Bifunctional enzyme. Involved in de novo dTMP biosynthesis. Key enzyme in folate metabolism. Can play two different roles depending on the source of dihydrofolate: de novo synthesis of tetrahydrofolate or recycling of the dihydrofolate released as one of the end products of the TS catalyzed reaction. Catalyzes an essential reaction for de novo glycine and purine synthesis, DNA precursor synthesis, and for the conversion of dUMP to dTMP. In Arabidopsis thaliana (Mouse-ear cress), this protein is Bifunctional dihydrofolate reductase-thymidylate synthase 2 (THY-2).